A 512-amino-acid chain; its full sequence is MVLDLDLFRVDKGGDPALIRETQEKRFKDPGLVDQLVKADSEWRRCRFRADNLNKLKNLCSKTIGEKMKKKEPVGEDESIPEDVLNFDDLTADTLAALKVSQIKKVRLLVDEAIQKCDGERVKLEAERFENLREIGNLLHPSVPISNDEDADNKVERIWGDCTVRKKYSHVDLVVMVDGFEGEKGAVVAGSRGYFLKGVLVFLEQALIQYALRTLGSRGYTPIYTPFFMRKEVMQEVAQLSQFDEELYKVIGKGSEKSDDSSYDEKYLIATSEQPIAALHRDEWLRPEDLPIKYAGFSTCFRQEVGSHGRDTRGIFRVHQFEKIEQFVYSSPHDNKSWEMFDEMITTAEEFYQSLGIPYHIVNIVSGSLNHAASKKLDLEAWFPGSGAFRELVSCSNCTDYQARRLRIRYGQTKKMMDKVEFVHMLNATMCATTRTICAILENYQTEKGIVVPEKLREFMPPGLQELIPFVKPAPIDQEPSKKQKKQHEGSKKKAKEVTLENQLQNMEVTEA.

N-acetylmethionine is present on Met-1. The tract at residues 9–61 (RVDKGGDPALIRETQEKRFKDPGLVDQLVKADSEWRRCRFRADNLNKLKNLCS) is interaction with tRNA. The residue at position 241 (Ser-241) is a Phosphoserine. Residues Thr-271 and Arg-302 each coordinate L-serine. ATP contacts are provided by residues 302–304 (RQE) and 318–321 (VHQF). Lys-323 carries the N6-acetyllysine modification. L-serine is bound at residue Glu-325. 391–394 (ELVS) is an ATP binding site. Asn-427 contributes to the L-serine binding site. The interval 472 to 512 (KPAPIDQEPSKKQKKQHEGSKKKAKEVTLENQLQNMEVTEA) is disordered. The span at 479–499 (EPSKKQKKQHEGSKKKAKEVT) shows a compositional bias: basic and acidic residues. Residues 482–494 (KKQKKQHEGSKKK) carry the Nuclear localization signal motif. Polar residues predominate over residues 500-512 (LENQLQNMEVTEA).

This sequence belongs to the class-II aminoacyl-tRNA synthetase family. Type-1 seryl-tRNA synthetase subfamily. As to quaternary structure, homodimer. The tRNA molecule may bind across the dimer. Interacts with SIRT2. Interacts with METTL6; interaction is required for the tRNA N(3)-methylcytidine methyltransferase activity of METTL6.

It localises to the cytoplasm. The protein resides in the nucleus. The enzyme catalyses tRNA(Ser) + L-serine + ATP = L-seryl-tRNA(Ser) + AMP + diphosphate + H(+). It catalyses the reaction tRNA(Sec) + L-serine + ATP = L-seryl-tRNA(Sec) + AMP + diphosphate + H(+). It participates in aminoacyl-tRNA biosynthesis; selenocysteinyl-tRNA(Sec) biosynthesis; L-seryl-tRNA(Sec) from L-serine and tRNA(Sec): step 1/1. Its function is as follows. Catalyzes the attachment of serine to tRNA(Ser) in a two-step reaction: serine is first activated by ATP to form Ser-AMP and then transferred to the acceptor end of tRNA(Ser). Is probably also able to aminoacylate tRNA(Sec) with serine, to form the misacylated tRNA L-seryl-tRNA(Sec), which will be further converted into selenocysteinyl-tRNA(Sec). In the nucleus, binds to the VEGFA core promoter and prevents MYC binding and transcriptional activation by MYC. Recruits SIRT2 to the VEGFA promoter, promoting deacetylation of histone H4 at 'Lys-16' (H4K16). Thereby, inhibits the production of VEGFA and sprouting angiogenesis mediated by VEGFA. The polypeptide is Serine--tRNA ligase, cytoplasmic (Sars1) (Rattus norvegicus (Rat)).